Consider the following 630-residue polypeptide: Molybdenum cofactor biosynthesis protein 1 (630 aa).

Residues 61 to 298 (RFNRHHTYLR…SKTYHVPGFK (238 aa)) form the Radical SAM core domain. A GTP-binding site is contributed by R70. [4Fe-4S] cluster is bound by residues C77 and C81. Y83 is an S-adenosyl-L-methionine binding site. C84 is a binding site for [4Fe-4S] cluster. R120 contacts GTP. Position 124 (G124) interacts with S-adenosyl-L-methionine. A GTP-binding site is contributed by T151. S175 contributes to the S-adenosyl-L-methionine binding site. K212 is a GTP binding site. Residue M246 coordinates S-adenosyl-L-methionine. [4Fe-4S] cluster contacts are provided by C312 and C315. 317–319 (RLR) serves as a coordination point for GTP. C329 is a binding site for [4Fe-4S] cluster. The interval 402-629 (KEVKNYLLKL…GGKSSSPQIT (228 aa)) is molybdenum cofactor biosynthesis protein C. The active-site For molybdenum cofactor biosynthesis protein C activity is the D599.

It in the C-terminal section; belongs to the MoaC family. In the N-terminal section; belongs to the radical SAM superfamily. MoaA family. In terms of assembly, isoform mocs1a and isoform mocs1b probably form a heterooligomer. [4Fe-4S] cluster is required as a cofactor.

It carries out the reaction GTP + AH2 + S-adenosyl-L-methionine = (8S)-3',8-cyclo-7,8-dihydroguanosine 5'-triphosphate + 5'-deoxyadenosine + L-methionine + A + H(+). It catalyses the reaction (8S)-3',8-cyclo-7,8-dihydroguanosine 5'-triphosphate = cyclic pyranopterin phosphate + diphosphate. Its pathway is cofactor biosynthesis; molybdopterin biosynthesis. Isoform mocs1a and isoform mocs1b probably form a complex that catalyzes the conversion of 5'-GTP to cyclic pyranopterin monophosphate (cPMP). mocs1a catalyzes the cyclization of GTP to (8S)-3',8-cyclo-7,8-dihydroguanosine 5'-triphosphate and mocs1b catalyzes the subsequent conversion of (8S)-3',8-cyclo-7,8-dihydroguanosine 5'-triphosphate to cPMP. This is Molybdenum cofactor biosynthesis protein 1 (mocs1) from Dictyostelium discoideum (Social amoeba).